The following is a 161-amino-acid chain: SsrA-binding protein (161 aa).

It belongs to the SmpB family.

Its subcellular location is the cytoplasm. Required for rescue of stalled ribosomes mediated by trans-translation. Binds to transfer-messenger RNA (tmRNA), required for stable association of tmRNA with ribosomes. tmRNA and SmpB together mimic tRNA shape, replacing the anticodon stem-loop with SmpB. tmRNA is encoded by the ssrA gene; the 2 termini fold to resemble tRNA(Ala) and it encodes a 'tag peptide', a short internal open reading frame. During trans-translation Ala-aminoacylated tmRNA acts like a tRNA, entering the A-site of stalled ribosomes, displacing the stalled mRNA. The ribosome then switches to translate the ORF on the tmRNA; the nascent peptide is terminated with the 'tag peptide' encoded by the tmRNA and targeted for degradation. The ribosome is freed to recommence translation, which seems to be the essential function of trans-translation. The protein is SsrA-binding protein of Vibrio campbellii (strain ATCC BAA-1116).